The following is a 294-amino-acid chain: 4-hydroxy-tetrahydrodipicolinate synthase (294 aa).

Position 47 (threonine 47) interacts with pyruvate. The active-site Proton donor/acceptor is the tyrosine 135. The active-site Schiff-base intermediate with substrate is the lysine 164. Valine 206 contacts pyruvate.

It belongs to the DapA family. Homotetramer; dimer of dimers.

Its subcellular location is the cytoplasm. It carries out the reaction L-aspartate 4-semialdehyde + pyruvate = (2S,4S)-4-hydroxy-2,3,4,5-tetrahydrodipicolinate + H2O + H(+). It participates in amino-acid biosynthesis; L-lysine biosynthesis via DAP pathway; (S)-tetrahydrodipicolinate from L-aspartate: step 3/4. Functionally, catalyzes the condensation of (S)-aspartate-beta-semialdehyde [(S)-ASA] and pyruvate to 4-hydroxy-tetrahydrodipicolinate (HTPA). This is 4-hydroxy-tetrahydrodipicolinate synthase from Lachnoclostridium phytofermentans (strain ATCC 700394 / DSM 18823 / ISDg) (Clostridium phytofermentans).